Reading from the N-terminus, the 128-residue chain is Fluoride-specific ion channel FluC (128 aa).

4 helical membrane passes run valine 4–tryptophan 24, phenylalanine 35–alanine 55, phenylalanine 67–methionine 87, and leucine 99–leucine 119. The Na(+) site is built by glycine 74 and threonine 77.

This sequence belongs to the fluoride channel Fluc/FEX (TC 1.A.43) family.

The protein localises to the cell inner membrane. It carries out the reaction fluoride(in) = fluoride(out). Na(+) is not transported, but it plays an essential structural role and its presence is essential for fluoride channel function. Fluoride-specific ion channel. Important for reducing fluoride concentration in the cell, thus reducing its toxicity. This chain is Fluoride-specific ion channel FluC, found in Parabacteroides distasonis (strain ATCC 8503 / DSM 20701 / CIP 104284 / JCM 5825 / NCTC 11152).